The chain runs to 422 residues: Lactose-binding protein (422 aa).

The N-terminal stretch at 1-28 (MDYSRLLKRSVSAALTAAALLCSTAAFA) is a signal peptide. A lactose-binding region spans residues 246 to 277 (SNDGIRALTSGDVASVLRGVWITGTVKSQPDQ).

The protein belongs to the bacterial solute-binding protein 1 family.

Its subcellular location is the periplasm. Part of the binding-protein-dependent transport system for lactose. The chain is Lactose-binding protein (lacE) from Rhizobium radiobacter (Agrobacterium tumefaciens).